Here is a 145-residue protein sequence, read N- to C-terminus: MWFLVKATFWFSLVLVLLPFLDPSSSEKLEHGPKMEIGGTFSAANEAIQYISAICVEKPDVCEKGAETFVALGHRAREGARIAYEFLNTQFAEGDAAAPDVKVMTGTVTPAESVPSAEATEKAEPAFKRMPVPEHRLDPGPASGK.

A helical transmembrane segment spans residues 1 to 21 (MWFLVKATFWFSLVLVLLPFL). The segment at 109 to 145 (TPAESVPSAEATEKAEPAFKRMPVPEHRLDPGPASGK) is disordered. Positions 119 to 138 (ATEKAEPAFKRMPVPEHRLD) are enriched in basic and acidic residues.

The protein resides in the membrane. This is an uncharacterized protein from Rhizobium meliloti (strain 1021) (Ensifer meliloti).